The sequence spans 87 residues: Large ribosomal subunit protein eL33 (87 aa).

Belongs to the eukaryotic ribosomal protein eL33 family.

The protein is Large ribosomal subunit protein eL33 of Pyrococcus horikoshii (strain ATCC 700860 / DSM 12428 / JCM 9974 / NBRC 100139 / OT-3).